We begin with the raw amino-acid sequence, 167 residues long: Translationally-controlled tumor protein homolog (167 aa).

Residues M1 to I167 enclose the TCTP domain.

Belongs to the TCTP family.

It is found in the cytoplasm. The protein localises to the cytoskeleton. Involved in protein synthesis. Involved in microtubule stabilization. The sequence is that of Translationally-controlled tumor protein homolog from Mycosarcoma maydis (Corn smut fungus).